Here is a 475-residue protein sequence, read N- to C-terminus: Ribulose bisphosphate carboxylase large chain (475 aa).

Positions 1–2 (MS) are excised as a propeptide. An N-acetylproline modification is found at Pro3. Lys14 is modified (N6,N6,N6-trimethyllysine). Substrate-binding residues include Asn123 and Thr173. The active-site Proton acceptor is the Lys175. Residue Lys177 participates in substrate binding. Positions 201, 203, and 204 each coordinate Mg(2+). At Lys201 the chain carries N6-carboxylysine. The active-site Proton acceptor is the His294. Substrate is bound by residues Arg295, His327, and Ser379.

It belongs to the RuBisCO large chain family. Type I subfamily. As to quaternary structure, heterohexadecamer of 8 large chains and 8 small chains; disulfide-linked. The disulfide link is formed within the large subunit homodimers. It depends on Mg(2+) as a cofactor. The disulfide bond which can form in the large chain dimeric partners within the hexadecamer appears to be associated with oxidative stress and protein turnover.

It localises to the plastid. It is found in the chloroplast. The enzyme catalyses 2 (2R)-3-phosphoglycerate + 2 H(+) = D-ribulose 1,5-bisphosphate + CO2 + H2O. It carries out the reaction D-ribulose 1,5-bisphosphate + O2 = 2-phosphoglycolate + (2R)-3-phosphoglycerate + 2 H(+). RuBisCO catalyzes two reactions: the carboxylation of D-ribulose 1,5-bisphosphate, the primary event in carbon dioxide fixation, as well as the oxidative fragmentation of the pentose substrate in the photorespiration process. Both reactions occur simultaneously and in competition at the same active site. This is Ribulose bisphosphate carboxylase large chain from Physcomitrium patens (Spreading-leaved earth moss).